The primary structure comprises 810 residues: Plasminogen (810 aa).

The signal sequence occupies residues 1-19 (MEHKEVVLLLLLFLKSGQG). In terms of domain architecture, PAN spans 20 to 98 (EPLDDYVNTQ…RDVVLFEKKV (79 aa)). Cystine bridges form between cysteine 49-cysteine 73, cysteine 53-cysteine 61, cysteine 103-cysteine 181, cysteine 124-cysteine 164, cysteine 152-cysteine 176, cysteine 185-cysteine 262, cysteine 188-cysteine 316, cysteine 206-cysteine 245, cysteine 234-cysteine 257, cysteine 275-cysteine 352, cysteine 296-cysteine 335, and cysteine 324-cysteine 347. Kringle domains follow at residues 103–181 (CKTG…ILEC) and 184–262 (ECMH…IPRC). The segment at 126–145 (KWSSTSPHRPRFSPATHPSE) is disordered. L-lysine-binding residues include arginine 136, aspartate 158, and arginine 172. Residue serine 268 is glycosylated (O-linked (GalNAc...) serine). Residues 275-352 (CLKGTGENYR…RWEYCKIPSC (78 aa)) form the Kringle 3 domain. N-linked (GlcNAc...) asparagine glycosylation occurs at asparagine 308. A glycan (O-linked (GalNAc...) threonine) is linked at threonine 365. Disulfide bonds link cysteine 377–cysteine 454, cysteine 398–cysteine 437, cysteine 426–cysteine 449, cysteine 481–cysteine 560, cysteine 502–cysteine 543, cysteine 531–cysteine 555, cysteine 567–cysteine 685, cysteine 577–cysteine 585, and cysteine 607–cysteine 623. 2 Kringle domains span residues 377-454 (CYHG…LKKC) and 481-560 (CMFG…VPQC). The tract at residues 396 to 416 (KKCQSWSSMTPHRHQKTPENY) is disordered. Positions 432 and 445 each coordinate L-lysine. In terms of domain architecture, Peptidase S1 spans 581–808 (VVGGCVAHPH…FVTWIEGVMR (228 aa)). Serine 597 is modified (phosphoserine). Catalysis depends on charge relay system residues histidine 622 and aspartate 665. Residue serine 688 is modified to Phosphoserine. Intrachain disulfides connect cysteine 699–cysteine 766, cysteine 729–cysteine 745, and cysteine 756–cysteine 784. Catalysis depends on serine 760, which acts as the Charge relay system.

The protein belongs to the peptidase S1 family. Plasminogen subfamily. In terms of assembly, interacts (both mature PLG and the angiostatin peptide) with CSPG4 and AMOT. Interacts (via the Kringle domains) with HRG; the interaction tethers PLG to the cell surface and enhances its activation. Interacts (via Kringle 4 domain) with ADA; the interaction stimulates PLG activation when in complex with DPP4. Angiostatin: Interacts with ATP5F1A; the interaction inhibits most of the angiogenic effects of angiostatin. Interacts (plasmin) with iripin-8, a serine protease inhibitor from Ixodes ricinus saliva. Interacts (plasmin) with iripin-1, a serine protease inhibitor from Ixodes ricinus saliva. Interacts (plasmin) with Kazal-type trypsin inhibitor, a serine protease inhibitor from Aedes aegypti. As to quaternary structure, (Microbial infection) Interacts with C.albicans GPD2; the interaction is direct and provides active plasmin on the surface of fungal cells. (Microbial infection) Interacts with Staphylococcus aureus protein FnbB; this interaction provides active plasmin on the surface of bacterial cells. In terms of assembly, (Microbial infection) Interacts with P.falciparum (strain NF54) enolase ENO (via DKSLVK motif); the interaction occurs at the ookinete cell surface and is required for ookinete invasion of the mosquito midgut. As to quaternary structure, (Microbial infection) Interacts with B.burgdorferi OspC. Post-translationally, N-linked glycan contains N-acetyllactosamine and sialic acid. O-linked glycans consist of Gal-GalNAc disaccharide modified with up to 2 sialic acid residues (microheterogeneity). In the presence of the inhibitor, the activation involves only cleavage after Arg-580, yielding two chains held together by two disulfide bonds. In the absence of the inhibitor, the activation involves additionally the removal of the activation peptide. In terms of processing, (Microbial infection) The Y.pestis Pla protein cleaves between Arg-580 and Val-581, generating plasmin which facilitates bacterial migration and infection. Present in plasma and many other extracellular fluids. It is synthesized in the liver.

It is found in the secreted. It catalyses the reaction Preferential cleavage: Lys-|-Xaa &gt; Arg-|-Xaa, higher selectivity than trypsin. Converts fibrin into soluble products.. Converted into plasmin by plasminogen activators, both plasminogen and its activator being bound to fibrin. Activated with catalytic amounts of streptokinase. Plasmin activity inhibited by SERPINE2. Functionally, plasmin dissolves the fibrin of blood clots and acts as a proteolytic factor in a variety of other processes including embryonic development, tissue remodeling, tumor invasion, and inflammation. In ovulation, weakens the walls of the Graafian follicle. It activates the urokinase-type plasminogen activator, collagenases and several complement zymogens, such as C1, C4 and C5. Cleavage of fibronectin and laminin leads to cell detachment and apoptosis. Also cleaves fibrin, thrombospondin and von Willebrand factor. Its role in tissue remodeling and tumor invasion may be modulated by CSPG4. Binds to cells. In terms of biological role, angiostatin is an angiogenesis inhibitor that blocks neovascularization and growth of experimental primary and metastatic tumors in vivo. Its function is as follows. (Microbial infection) ENO/enoloase from parasite P.falciparum (strain NF54) interacts with PLG present in the mosquito blood meal to promote the invasion of the mosquito midgut by the parasite ookinete. The catalytic active form, plasmin, is essential for the invasion of the mosquito midgut. (Microbial infection) Binds to OspC on the surface of B.burgdorferi cells, possibly conferring an extracellular protease activity on the bacteria that allows it to traverse host tissue. Functionally, (Microbial infection) Interacts with dengue virus type 2 particles. Enhances dengue virus type 2 infection in Aedes aegypti mosquito midgut by increasing midgut internalization, resulting in higher infection rates and viral dissemination in mosquitoes. The sequence is that of Plasminogen (PLG) from Homo sapiens (Human).